The sequence spans 123 residues: Small ribosomal subunit protein uS12 (123 aa).

3-methylthioaspartic acid is present on Asp89. The tract at residues 101 to 123 (TLDTSGVSDRRQSRSKYGAKRPK) is disordered. Positions 113–123 (SRSKYGAKRPK) are enriched in basic residues.

Belongs to the universal ribosomal protein uS12 family. Part of the 30S ribosomal subunit. Contacts proteins S8 and S17. May interact with IF1 in the 30S initiation complex.

Functionally, with S4 and S5 plays an important role in translational accuracy. In terms of biological role, interacts with and stabilizes bases of the 16S rRNA that are involved in tRNA selection in the A site and with the mRNA backbone. Located at the interface of the 30S and 50S subunits, it traverses the body of the 30S subunit contacting proteins on the other side and probably holding the rRNA structure together. The combined cluster of proteins S8, S12 and S17 appears to hold together the shoulder and platform of the 30S subunit. The chain is Small ribosomal subunit protein uS12 from Solidesulfovibrio magneticus (strain ATCC 700980 / DSM 13731 / RS-1) (Desulfovibrio magneticus).